The following is a 176-amino-acid chain: Protein MOTHER of FT and TFL1 homolog 1 (176 aa).

The protein belongs to the phosphatidylethanolamine-binding protein family.

May form complexes with phosphorylated ligands by interfering with kinases and their effectors. The sequence is that of Protein MOTHER of FT and TFL1 homolog 1 from Oryza sativa subsp. japonica (Rice).